We begin with the raw amino-acid sequence, 149 residues long: Large ribosomal subunit protein uL15 (149 aa).

A compositionally biased stretch (basic and acidic residues) spans 1-11; sequence MSDPIKLHDLR. The interval 1–44 is disordered; that stretch reads MSDPIKLHDLRPAPGAKKAKTRVGRGEASKGKTAGRGTKGTKAR.

It belongs to the universal ribosomal protein uL15 family. As to quaternary structure, part of the 50S ribosomal subunit.

Binds to the 23S rRNA. This chain is Large ribosomal subunit protein uL15, found in Corynebacterium jeikeium (strain K411).